Consider the following 888-residue polypeptide: uncharacterized protein (888 aa).

Positions 1 to 20 (MKILKSLVLLVLFIVMPAKA) are cleaved as a signal peptide. The next 6 membrane-spanning stretches (helical) occupy residues 513-533 (IVKAALTLYVIIFGLMFVAGA), 565-585 (TYFFSVFTDGINFFITNVVGA), 611-631 (LLFIELLQIHNGLAFIAIITI), 649-669 (VIAFIGITVMISLAPFFIILM), 682-702 (ISTLLSYVVQPTILLIFFLLI), and 781-801 (LLFYSYCLMSYGLVTFVNIVV).

This sequence belongs to the TrbL/VirB6 family.

The protein resides in the cell membrane. This is an uncharacterized protein from Rickettsia prowazekii (strain Madrid E).